A 356-amino-acid polypeptide reads, in one-letter code: Protein-glutamate methylesterase/protein-glutamine glutaminase 2 (356 aa).

One can recognise a Response regulatory domain in the interval Lys4–Glu121. 4-aspartylphosphate is present on Asp55. One can recognise a CheB-type methylesterase domain in the interval Phe169–Arg356. Residues Ser181, His207, and Asp303 contribute to the active site.

This sequence belongs to the CheB family. Post-translationally, phosphorylated by CheA. Phosphorylation of the N-terminal regulatory domain activates the methylesterase activity.

Its subcellular location is the cytoplasm. The enzyme catalyses [protein]-L-glutamate 5-O-methyl ester + H2O = L-glutamyl-[protein] + methanol + H(+). The catalysed reaction is L-glutaminyl-[protein] + H2O = L-glutamyl-[protein] + NH4(+). Its function is as follows. Involved in chemotaxis. Part of a chemotaxis signal transduction system that modulates chemotaxis in response to various stimuli. Catalyzes the demethylation of specific methylglutamate residues introduced into the chemoreceptors (methyl-accepting chemotaxis proteins or MCP) by CheR. Also mediates the irreversible deamidation of specific glutamine residues to glutamic acid. The sequence is that of Protein-glutamate methylesterase/protein-glutamine glutaminase 2 from Chromobacterium violaceum (strain ATCC 12472 / DSM 30191 / JCM 1249 / CCUG 213 / NBRC 12614 / NCIMB 9131 / NCTC 9757 / MK).